The following is a 372-amino-acid chain: Glutamate 5-kinase (372 aa).

An ATP-binding site is contributed by Lys6. Residues Ser46, Asp133, and Asn145 each coordinate substrate. Residues 165 to 166 (TD) and 207 to 213 (TGGMYTK) each bind ATP. In terms of domain architecture, PUA spans 272 to 350 (NGFLFVDEGA…HDIESILGYK (79 aa)).

Belongs to the glutamate 5-kinase family.

It is found in the cytoplasm. It catalyses the reaction L-glutamate + ATP = L-glutamyl 5-phosphate + ADP. It participates in amino-acid biosynthesis; L-proline biosynthesis; L-glutamate 5-semialdehyde from L-glutamate: step 1/2. Catalyzes the transfer of a phosphate group to glutamate to form L-glutamate 5-phosphate. This is Glutamate 5-kinase from Caldanaerobacter subterraneus subsp. tengcongensis (strain DSM 15242 / JCM 11007 / NBRC 100824 / MB4) (Thermoanaerobacter tengcongensis).